The following is a 134-amino-acid chain: Protein X (134 aa).

The disordered stretch occupies residues 25-48 (SRGRPVSGPFGPLPSPSSSAVPAD). A compositionally biased stretch (low complexity) spans 29 to 47 (PVSGPFGPLPSPSSSAVPA). The segment at 68–117 (PCALRLTSARRMETTVNAHQVLPKVLHKRTLGLSAMSTTDLEAYFKDCLF) is mitochondrial targeting sequence.

It belongs to the orthohepadnavirus protein X family. In terms of assembly, may form homodimer. May interact with host CEBPA, CFLAR, CREB1, DDB1, E4F1, HBXIP, HSPD1/HSP60, NFKBIA, POLR2E and SMAD4. Interacts with host SMC5-SMC6 complex and induces its degradation. Interacts with host TRPC4AP; leading to prevent ubiquitination of TRPC4AP. Interacts with host PLSCR1; this interaction promotes ubiquitination and degradation of HBx and impairs HBx-mediated cell proliferation. A fraction may be phosphorylated in insect cells and HepG2 cells, a human hepatoblastoma cell line. Phosphorylated in vitro by host protein kinase C or mitogen-activated protein kinase. N-acetylated in insect cells.

It is found in the host cytoplasm. The protein resides in the host nucleus. Its subcellular location is the host mitochondrion. Multifunctional protein that plays a role in silencing host antiviral defenses and promoting viral transcription. Does not seem to be essential for HBV infection. May be directly involved in development of cirrhosis and liver cancer (hepatocellular carcinoma). Most of cytosolic activities involve modulation of cytosolic calcium. The effect on apoptosis is controversial depending on the cell types in which the studies have been conducted. May induce apoptosis by localizing in mitochondria and causing loss of mitochondrial membrane potential. May also modulate apoptosis by binding host CFLAR, a key regulator of the death-inducing signaling complex (DISC). Promotes viral transcription by using the host E3 ubiquitin ligase DDB1 to target the SMC5-SMC6 complex to proteasomal degradation. This host complex would otherwise bind to viral episomal DNA, and prevents its transcription. Moderately stimulates transcription of many different viral and cellular transcription elements. Promoters and enhancers stimulated by HBx contain DNA binding sites for NF-kappa-B, AP-1, AP-2, c-EBP, ATF/CREB, or the calcium-activated factor NF-AT. The chain is Protein X from Homo sapiens (Human).